The primary structure comprises 476 residues: Homeobox even-skipped homolog protein 2 (476 aa).

2 disordered regions span residues 82 to 113 and 142 to 185; these read TGSE…AEAD and KGYA…GSGA. Composition is skewed to low complexity over residues 84–96 and 147–159; these read SEST…SSAA and SGSA…SASG. Residues 160-183 are compositionally biased toward gly residues; the sequence is SGLGSLHGGSGGSGGSAALGGSGS. The segment at residues 188–247 is a DNA-binding region (homeobox); that stretch reads VRRYRTAFTREQIARLEKEFYRENYVSRPRRCELAAALNLPETTIKVWFQNRRMKDKRQR.

This sequence belongs to the even-skipped homeobox family.

It is found in the nucleus. The chain is Homeobox even-skipped homolog protein 2 (EVX2) from Homo sapiens (Human).